Consider the following 159-residue polypeptide: Neuroglobin (159 aa).

A Globin domain is found at 3–151; that stretch reads KLSEKDKELI…VVAAMSQGWA (149 aa). Heme b is bound by residues His66 and His98.

Belongs to the globin family. In terms of assembly, monomer. Homodimers and homotetramers. Mainly monomeric but also detected as part of homodimers and homotetramers.

It localises to the cytoplasm. Its subcellular location is the cytosol. The protein resides in the mitochondrion matrix. It catalyses the reaction Fe(III)-heme b-[protein] + nitric oxide + H2O = Fe(II)-heme b-[protein] + nitrite + 2 H(+). In terms of biological role, monomeric globin with a bis-histidyl six-coordinate heme-iron atom through which it can bind dioxygen, carbon monoxide and nitric oxide. Could help transport oxygen and increase its availability to the metabolically active neuronal tissues, though its low quantity in tissues as well as its high affinity for dioxygen, which may limit its oxygen-releasing ability, argue against it. The ferrous/deoxygenated form exhibits a nitrite reductase activity and it could produce nitric oxide which in turn inhibits cellular respiration in response to hypoxia. In its ferrous/deoxygenated state, it may also exhibit GDI (Guanine nucleotide Dissociation Inhibitor) activity toward heterotrimeric G-alpha proteins, thereby regulating signal transduction to facilitate neuroprotective responses in the wake of hypoxia and associated oxidative stress. This is Neuroglobin (ngb) from Dissostichus mawsoni (Antarctic cod).